The primary structure comprises 422 residues: RNA exonuclease 4 (422 aa).

The tract at residues methionine 1–isoleucine 194 is disordered. Serine 15 bears the Phosphoserine mark. The span at leucine 26–serine 40 shows a compositional bias: basic residues. Phosphoserine is present on residues serine 96 and serine 111. Basic and acidic residues-rich tracts occupy residues asparagine 106–alanine 127 and glycine 151–histidine 176. A Glycyl lysine isopeptide (Lys-Gly) (interchain with G-Cter in SUMO2) cross-link involves residue lysine 115. The Exonuclease domain maps to alanine 243 to tyrosine 394.

It belongs to the REXO4 family. As to quaternary structure, can bind ESR1 and ESR2. This interaction is abrogated by estrogen and augmented by tamoxifen treatment.

The protein resides in the nucleus. It is found in the nucleolus. The polypeptide is RNA exonuclease 4 (REXO4) (Homo sapiens (Human)).